The sequence spans 572 residues: Urocanate hydratase (572 aa).

NAD(+) contacts are provided by residues 48 to 49, Q126, 172 to 174, D192, 238 to 239, 259 to 263, 268 to 269, and Y317; these read GG, GMG, NA, QTSAH, and YL. The active site involves C405. G487 serves as a coordination point for NAD(+). The span at 550–559 shows a compositional bias: basic and acidic residues; sequence EGDEAHEGDA. Residues 550–572 are disordered; sequence EGDEAHEGDAAHGSGAAREGDGV.

Belongs to the urocanase family. NAD(+) is required as a cofactor.

Its subcellular location is the cytoplasm. It catalyses the reaction 4-imidazolone-5-propanoate = trans-urocanate + H2O. The protein operates within amino-acid degradation; L-histidine degradation into L-glutamate; N-formimidoyl-L-glutamate from L-histidine: step 2/3. Catalyzes the conversion of urocanate to 4-imidazolone-5-propionate. In Streptomyces coelicolor (strain ATCC BAA-471 / A3(2) / M145), this protein is Urocanate hydratase.